The primary structure comprises 413 residues: Phosphoribosylamine--glycine ligase (413 aa).

Positions 108-310 (KQLMDKYRIP…LMQLIIDLEN (203 aa)) constitute an ATP-grasp domain. 134–190 (VETCDLPIVIKKDGLAAGKGVIIAFTREDALDGVKKIYQEEKGKVVFESYLEGEEFS) contacts ATP. Mg(2+)-binding residues include Glu280 and Asn282.

This sequence belongs to the GARS family. The cofactor is Mg(2+). Requires Mn(2+) as cofactor.

The catalysed reaction is 5-phospho-beta-D-ribosylamine + glycine + ATP = N(1)-(5-phospho-beta-D-ribosyl)glycinamide + ADP + phosphate + H(+). The protein operates within purine metabolism; IMP biosynthesis via de novo pathway; N(1)-(5-phospho-D-ribosyl)glycinamide from 5-phospho-alpha-D-ribose 1-diphosphate: step 2/2. The polypeptide is Phosphoribosylamine--glycine ligase (Staphylococcus epidermidis (strain ATCC 12228 / FDA PCI 1200)).